The chain runs to 245 residues: MHPQGRAASPQLLLGLFLVLLLLLQLSAPSSASENPKVKQKALIRQREVVDLYNGMCLQGPAGVPGRDGSPGANGIPGTPGIPGRDGFKGEKGECLRESFEESWTPNYKQCSWSSLNYGIDLGKIAECTFTKMRSNSALRVLFSGSLRLKCRNACCQRWYFTFNGAECSGPLPIEAIIYLDQGSPELNSTINIHRTSSVEGLCEGIGAGLVDVAIWVGTCSDYPKGDASTGWNSVSRIIIEELPK.

Residues 1-32 (MHPQGRAASPQLLLGLFLVLLLLLQLSAPSSA) form the signal peptide. Positions 59 to 92 (QGPAGVPGRDGSPGANGIPGTPGIPGRDGFKGEK) constitute a Collagen-like domain. The segment at 64-87 (VPGRDGSPGANGIPGTPGIPGRDG) is disordered. Residue Asn188 is glycosylated (N-linked (GlcNAc...) asparagine).

N-glycosylated. As to expression, expressed after injury in the carotid arteries (at protein level). Expressed in brain, lung, and after injury in fibroblasts of the adventitia and the neointima of the arteries.

The protein resides in the secreted. It is found in the extracellular space. Its subcellular location is the extracellular matrix. Its function is as follows. Its overexpression in smooth muscle cell lines increases their migratory ability and inhibits collagen type I expression. May act as a negative regulator of collagen matrix deposition. The chain is Collagen triple helix repeat-containing protein 1 (Cthrc1) from Rattus norvegicus (Rat).